Consider the following 360-residue polypeptide: Ribosomal RNA large subunit methyltransferase M (360 aa).

S-adenosyl-L-methionine is bound by residues Ser-187, 220 to 223, Asp-239, Asp-259, and Asp-276; that span reads CPGG. Lys-305 acts as the Proton acceptor in catalysis.

Belongs to the class I-like SAM-binding methyltransferase superfamily. RNA methyltransferase RlmE family. RlmM subfamily. In terms of assembly, monomer.

The protein resides in the cytoplasm. The enzyme catalyses cytidine(2498) in 23S rRNA + S-adenosyl-L-methionine = 2'-O-methylcytidine(2498) in 23S rRNA + S-adenosyl-L-homocysteine + H(+). Its function is as follows. Catalyzes the 2'-O-methylation at nucleotide C2498 in 23S rRNA. The polypeptide is Ribosomal RNA large subunit methyltransferase M (Photobacterium profundum (strain SS9)).